We begin with the raw amino-acid sequence, 317 residues long: Glucose-6-phosphate isomerase, cytosolic 2B (317 aa).

Glu-108 serves as the catalytic Proton donor. Active-site residues include His-139 and Lys-264.

The protein belongs to the GPI family. In terms of assembly, homodimer.

The protein localises to the cytoplasm. It catalyses the reaction alpha-D-glucose 6-phosphate = beta-D-fructose 6-phosphate. Its pathway is carbohydrate degradation; glycolysis; D-glyceraldehyde 3-phosphate and glycerone phosphate from D-glucose: step 2/4. The chain is Glucose-6-phosphate isomerase, cytosolic 2B (PGIC2-B) from Clarkia lewisii (Farewell-to-spring).